The sequence spans 268 residues: MGHYIKTEEHVTLFVEDIGHGRPIIFLHGWPLNHKMFEYQMNELPKRGFRFIGVDLRGYGQSDRPWEGYDYDTMADDVKAVIYTLQLENAILAGFSMGGAIAIRYMARHEGADVDKLILLSAAAPAFTKRPGYPYGMRKQDIDDMIELFKADRPKTLADLGKQFFEKKVSPELRQWFLNLMLEASSYGTIHSGIALRDEDLRKELAAIKVPTLILHGRKDRIAPFDFAKELKRGIKQSELVPFANSGHGAFYEEKEKINSLIAQFSNS.

Positions 23–254 (PIIFLHGWPL…NSGHGAFYEE (232 aa)) constitute an AB hydrolase-1 domain. Active-site residues include serine 96, aspartate 220, and histidine 248.

Belongs to the AB hydrolase superfamily.

The chain is AB hydrolase superfamily protein YisY (yisY) from Bacillus subtilis (strain 168).